We begin with the raw amino-acid sequence, 152 residues long: Siroheme decarboxylase beta subunit (152 aa).

The protein belongs to the Ahb/Nir family. In terms of assembly, forms a heterodimer composed of AhbA and AhbB.

The catalysed reaction is siroheme + 2 H(+) = 12,18-didecarboxysiroheme + 2 CO2. The protein operates within porphyrin-containing compound metabolism; protoheme biosynthesis. Its activity is regulated as follows. Binds heme b. The redox state of the heme b modulates the activity of the enzyme. Activity is stimulated by sodium dithionite. Involved in siroheme-dependent heme b biosynthesis. Catalyzes the decarboxylation of siroheme into didecarboxysiroheme. This is Siroheme decarboxylase beta subunit from Methanosarcina barkeri (strain Fusaro / DSM 804).